We begin with the raw amino-acid sequence, 334 residues long: Glucokinase-like protein PD_0680 (334 aa).

18–23 (ADVGGT) lines the ATP pocket.

It belongs to the bacterial glucokinase family.

This Xylella fastidiosa (strain Temecula1 / ATCC 700964) protein is Glucokinase-like protein PD_0680.